The chain runs to 326 residues: Protease HtpX homolog (326 aa).

Transmembrane regions (helical) follow at residues 10–30 (LNMA…ALAV) and 41–61 (VGLM…QWLF). Position 147 (His-147) interacts with Zn(2+). The active site involves Glu-148. His-151 provides a ligand contact to Zn(2+). Helical transmembrane passes span 159–179 (LLMA…WIFW) and 197–217 (LLFL…LLVL). Zn(2+) is bound at residue Glu-224.

This sequence belongs to the peptidase M48B family. Requires Zn(2+) as cofactor.

Its subcellular location is the cell membrane. This Saccharolobus islandicus (strain Y.N.15.51 / Yellowstone #2) (Sulfolobus islandicus) protein is Protease HtpX homolog.